The sequence spans 440 residues: Thymidine phosphorylase (440 aa).

This sequence belongs to the thymidine/pyrimidine-nucleoside phosphorylase family. As to quaternary structure, homodimer.

The enzyme catalyses thymidine + phosphate = 2-deoxy-alpha-D-ribose 1-phosphate + thymine. It participates in pyrimidine metabolism; dTMP biosynthesis via salvage pathway; dTMP from thymine: step 1/2. The enzymes which catalyze the reversible phosphorolysis of pyrimidine nucleosides are involved in the degradation of these compounds and in their utilization as carbon and energy sources, or in the rescue of pyrimidine bases for nucleotide synthesis. In Salmonella agona (strain SL483), this protein is Thymidine phosphorylase.